A 207-amino-acid polypeptide reads, in one-letter code: Ribosomal RNA small subunit methyltransferase G (207 aa).

S-adenosyl-L-methionine contacts are provided by residues Gly73, Leu78, 124-125 (VE), and Arg139.

Belongs to the methyltransferase superfamily. RNA methyltransferase RsmG family.

The protein localises to the cytoplasm. The enzyme catalyses guanosine(527) in 16S rRNA + S-adenosyl-L-methionine = N(7)-methylguanosine(527) in 16S rRNA + S-adenosyl-L-homocysteine. Functionally, specifically methylates the N7 position of guanine in position 527 of 16S rRNA. This Escherichia coli (strain SMS-3-5 / SECEC) protein is Ribosomal RNA small subunit methyltransferase G.